The chain runs to 120 residues: Large ribosomal subunit protein bL20 (120 aa).

This sequence belongs to the bacterial ribosomal protein bL20 family.

Binds directly to 23S ribosomal RNA and is necessary for the in vitro assembly process of the 50S ribosomal subunit. It is not involved in the protein synthesizing functions of that subunit. This Methylobacillus flagellatus (strain ATCC 51484 / DSM 6875 / VKM B-1610 / KT) protein is Large ribosomal subunit protein bL20.